The primary structure comprises 384 residues: F-box/kelch-repeat protein At1g64840 (384 aa).

In terms of domain architecture, F-box spans 3-51 (PNWSQLPEELLNLISKNLDNCFDVVHARSICRSWRSAFPFPSSLSTLSY). Kelch repeat units lie at residues 87–137 (PEYF…PLGF) and 259–309 (NPFP…CCSA).

The chain is F-box/kelch-repeat protein At1g64840 from Arabidopsis thaliana (Mouse-ear cress).